Reading from the N-terminus, the 74-residue chain is uncharacterized protein (74 aa).

The first 25 residues, 1-25 (MMMTDLPENIRKTAVALLRLGEATA), serve as a signal peptide directing secretion.

This is an uncharacterized protein from Archaeoglobus fulgidus (strain ATCC 49558 / DSM 4304 / JCM 9628 / NBRC 100126 / VC-16).